The chain runs to 293 residues: N-acetylmannosamine kinase (293 aa).

Residues 5-12 and 133-140 contribute to the ATP site; these read AIDIGGTK and GVGGGLVI. Residues H157, C167, C169, and C174 each contribute to the Zn(2+) site.

The protein belongs to the ROK (NagC/XylR) family. NanK subfamily. In terms of assembly, homodimer.

The enzyme catalyses an N-acyl-D-mannosamine + ATP = an N-acyl-D-mannosamine 6-phosphate + ADP + H(+). The protein operates within amino-sugar metabolism; N-acetylneuraminate degradation; D-fructose 6-phosphate from N-acetylneuraminate: step 2/5. Its function is as follows. Catalyzes the phosphorylation of N-acetylmannosamine (ManNAc) to ManNAc-6-P. In Vibrio vulnificus (strain YJ016), this protein is N-acetylmannosamine kinase.